The sequence spans 519 residues: Histidine--tRNA ligase (519 aa).

This sequence belongs to the class-II aminoacyl-tRNA synthetase family. As to quaternary structure, homodimer.

The protein resides in the cytoplasm. The enzyme catalyses tRNA(His) + L-histidine + ATP = L-histidyl-tRNA(His) + AMP + diphosphate + H(+). The protein is Histidine--tRNA ligase of Roseobacter denitrificans (strain ATCC 33942 / OCh 114) (Erythrobacter sp. (strain OCh 114)).